The following is a 198-amino-acid chain: MSKVLVLKSSILGGYSQSALLVDHLIGKWEDQGATITVRDLAGKDVLPMVDGEIASGLRGGAELTARQQEMLDLSNALVEELKANDTIVITAPMYNFNIPTQLKNWIDFVARAGVTFTYTENGPKGLVEGKRAVLITTRGGAHKDGPTDHIVPFLKTFLGFIGITDVEVVYGEALNMGPEANQKGISEAKQSLDALTV.

Residues S10, 16–18, 94–97, and 138–141 contribute to the FMN site; these read SQS, MYNF, and TRGG.

The protein belongs to the azoreductase type 1 family. Homodimer. FMN serves as cofactor.

It carries out the reaction 2 a quinone + NADH + H(+) = 2 a 1,4-benzosemiquinone + NAD(+). The enzyme catalyses N,N-dimethyl-1,4-phenylenediamine + anthranilate + 2 NAD(+) = 2-(4-dimethylaminophenyl)diazenylbenzoate + 2 NADH + 2 H(+). Its function is as follows. Quinone reductase that provides resistance to thiol-specific stress caused by electrophilic quinones. Also exhibits azoreductase activity. Catalyzes the reductive cleavage of the azo bond in aromatic azo compounds to the corresponding amines. This is FMN-dependent NADH:quinone oxidoreductase from Shewanella sp. (strain ANA-3).